The sequence spans 171 residues: Probable DNA-directed RNA polymerase subunit delta (171 aa).

The HTH HARE-type domain occupies 14–81; the sequence is MALVEIAYEI…SDQTWGLRSW (68 aa). The segment at 138 to 171 is disordered; it reads EFDEIDEADDDELDDLEDEILDDDEDFDEEEDEE.

This sequence belongs to the RpoE family. RNAP is composed of a core of 2 alpha, a beta and a beta' subunits. The core is associated with a delta subunit and one of several sigma factors.

Its function is as follows. Participates in both the initiation and recycling phases of transcription. In the presence of the delta subunit, RNAP displays an increased specificity of transcription, a decreased affinity for nucleic acids, and an increased efficiency of RNA synthesis because of enhanced recycling. The chain is Probable DNA-directed RNA polymerase subunit delta from Bacillus licheniformis (strain ATCC 14580 / DSM 13 / JCM 2505 / CCUG 7422 / NBRC 12200 / NCIMB 9375 / NCTC 10341 / NRRL NRS-1264 / Gibson 46).